We begin with the raw amino-acid sequence, 354 residues long: MIPQRIKELEAYKTEVTPASVRLSSNEFPYDFPEEIKQRALEELKKVPLNKYPDPEAKELKAVLADFFGVKEENLVLGNGSDELIYYLSIAIGELYIPVYIPVPTFPMYEISAKVLGRPLVKVQLDENFDIDLERSIELIEKEKPVLGYFAYPNNPTGNLFSRGKIEEIRNRGVFCVIDEAYYHYSGETFLEDALKREDTVVLRTLSKIGMASLRVGILIGKGEIVSEINKVRLPFNVTYPSQVMAKVLLTEGREFLMEKIQEVVKERERMYDEMKKIEGVEVFPSKANFLLFRTPYPAHEVYQELLKRDVLVRNVSYMEGLQKCLRVSVGKPEENNKFLEALEESIKSLSSSL.

Lys208 bears the N6-(pyridoxal phosphate)lysine mark.

It belongs to the class-II pyridoxal-phosphate-dependent aminotransferase family. Histidinol-phosphate aminotransferase subfamily. As to quaternary structure, homodimer. Pyridoxal 5'-phosphate serves as cofactor.

It carries out the reaction L-histidinol phosphate + 2-oxoglutarate = 3-(imidazol-4-yl)-2-oxopropyl phosphate + L-glutamate. It functions in the pathway amino-acid biosynthesis; L-histidine biosynthesis; L-histidine from 5-phospho-alpha-D-ribose 1-diphosphate: step 7/9. This chain is Histidinol-phosphate aminotransferase, found in Aquifex aeolicus (strain VF5).